Reading from the N-terminus, the 698-residue chain is DNA ligase (698 aa).

NAD(+) contacts are provided by residues 47–51 (DAQYD), 96–97 (SL), and glutamate 128. Lysine 130 acts as the N6-AMP-lysine intermediate in catalysis. Positions 151, 186, 303, and 327 each coordinate NAD(+). Residues cysteine 422, cysteine 425, cysteine 440, and cysteine 446 each contribute to the Zn(2+) site. Residues 620–698 (GDNLLLSNQT…EEEWIKMVNE (79 aa)) form the BRCT domain.

Belongs to the NAD-dependent DNA ligase family. LigA subfamily. Mg(2+) serves as cofactor. It depends on Mn(2+) as a cofactor.

It catalyses the reaction NAD(+) + (deoxyribonucleotide)n-3'-hydroxyl + 5'-phospho-(deoxyribonucleotide)m = (deoxyribonucleotide)n+m + AMP + beta-nicotinamide D-nucleotide.. DNA ligase that catalyzes the formation of phosphodiester linkages between 5'-phosphoryl and 3'-hydroxyl groups in double-stranded DNA using NAD as a coenzyme and as the energy source for the reaction. It is essential for DNA replication and repair of damaged DNA. The chain is DNA ligase from Orientia tsutsugamushi (strain Boryong) (Rickettsia tsutsugamushi).